The primary structure comprises 356 residues: sn-glycerol-3-phosphate import ATP-binding protein UgpC (356 aa).

An ABC transporter domain is found at 4–235; that stretch reads LKLQAVTKSW…PASRFVASFI (232 aa). 37–44 contributes to the ATP binding site; it reads GPSGCGKS.

Belongs to the ABC transporter superfamily. sn-glycerol-3-phosphate importer (TC 3.A.1.1.3) family. In terms of assembly, the complex is composed of two ATP-binding proteins (UgpC), two transmembrane proteins (UgpA and UgpE) and a solute-binding protein (UgpB).

It localises to the cell inner membrane. The catalysed reaction is sn-glycerol 3-phosphate(out) + ATP + H2O = sn-glycerol 3-phosphate(in) + ADP + phosphate + H(+). Its function is as follows. Part of the ABC transporter complex UgpBAEC involved in sn-glycerol-3-phosphate (G3P) import. Responsible for energy coupling to the transport system. The chain is sn-glycerol-3-phosphate import ATP-binding protein UgpC from Salmonella paratyphi A (strain ATCC 9150 / SARB42).